Here is a 293-residue protein sequence, read N- to C-terminus: Bifunctional protein FolD (293 aa).

NADP(+) contacts are provided by residues 165–167 (GRS), Ser190, and Ile231.

This sequence belongs to the tetrahydrofolate dehydrogenase/cyclohydrolase family. In terms of assembly, homodimer.

It catalyses the reaction (6R)-5,10-methylene-5,6,7,8-tetrahydrofolate + NADP(+) = (6R)-5,10-methenyltetrahydrofolate + NADPH. The enzyme catalyses (6R)-5,10-methenyltetrahydrofolate + H2O = (6R)-10-formyltetrahydrofolate + H(+). It participates in one-carbon metabolism; tetrahydrofolate interconversion. Catalyzes the oxidation of 5,10-methylenetetrahydrofolate to 5,10-methenyltetrahydrofolate and then the hydrolysis of 5,10-methenyltetrahydrofolate to 10-formyltetrahydrofolate. This chain is Bifunctional protein FolD, found in Synechococcus sp. (strain CC9902).